We begin with the raw amino-acid sequence, 198 residues long: NAD(P)H dehydrogenase (quinone) (198 aa).

A Flavodoxin-like domain is found at Ile-4–Val-190. Residues Ser-10–Ile-15 and Thr-79–Phe-81 each bind FMN. An NAD(+)-binding site is contributed by Tyr-12. Trp-99 is a binding site for substrate. Residues Ser-114–Gly-119 and His-134 each bind FMN.

The protein belongs to the WrbA family. It depends on FMN as a cofactor.

It carries out the reaction a quinone + NADH + H(+) = a quinol + NAD(+). The enzyme catalyses a quinone + NADPH + H(+) = a quinol + NADP(+). The polypeptide is NAD(P)H dehydrogenase (quinone) (Azotobacter vinelandii (strain DJ / ATCC BAA-1303)).